The chain runs to 396 residues: MSLYGMMRTGVSGMNAQANRLSTVADNIANASTVGYKRAETQFSSLVLPSTAGQYNSGSVLTDVRYGISDQGGIRSTSSTTDLAIDGNGYFVVQGPGGSTYLTRAGSFVPDKNGDLVNSAGYYLLGAGADEAAGGLTVAGLNVVNVNAAALPAEGSTAGDFTVNLPSTDQAPAAGGYNHKTSLISYNDKGEKITLDVYFTKTGADEWNVSVKNAADGVEIGTTVLNFDPTTGDLVSGGNVAVNLGAYGGQTLNLNLGGSTQRAGDYTISQAVINGQAPSSIKGVDVGNDGAVVAVYENGTQKVLYRIPLANVASPDRMTVVSGNIFLPSAESGDVRLGFPQGDGMGKIMSGTLEESNADIAQELTDMIEAQRSYTANSKVFQTGFELMDVLVNLKR.

The protein belongs to the flagella basal body rod proteins family.

The protein resides in the bacterial flagellum basal body. The sequence is that of Flagellar hook protein FlgE (flgE) from Brucella abortus biovar 1 (strain 9-941).